Reading from the N-terminus, the 259-residue chain is Global transcriptional regulator CodY (259 aa).

Positions 1-155 (MTLLEKTRKI…GGTVVGMEIL (155 aa)) are GAF domain. The H-T-H motif DNA-binding region spans 203–222 (ASKIADRVGITRSVIVNALR).

Belongs to the CodY family.

It is found in the cytoplasm. In terms of biological role, DNA-binding global transcriptional regulator which is involved in the adaptive response to starvation and acts by directly or indirectly controlling the expression of numerous genes in response to nutrient availability. During rapid exponential growth, CodY is highly active and represses genes whose products allow adaptation to nutrient depletion. The polypeptide is Global transcriptional regulator CodY (Listeria welshimeri serovar 6b (strain ATCC 35897 / DSM 20650 / CCUG 15529 / CIP 8149 / NCTC 11857 / SLCC 5334 / V8)).